We begin with the raw amino-acid sequence, 148 residues long: MDTHNKDDSIIRFSVSLQQNLLDELDNRIIKNGYSSRSELVRDLIREKLVEDNWAEDNPNDESKIAVLVVIYDHHQRELNQRMIDIQHASGTHVLCTTHIHMDEHNCLETIILQGNSFEIQRLQLEIGGLRGVKFAKLTKASSFEYNE.

4 residues coordinate Ni(2+): histidine 88, histidine 99, histidine 101, and cysteine 107.

It belongs to the transcriptional regulatory CopG/NikR family. Requires Ni(2+) as cofactor.

In terms of biological role, transcriptional regulator. The sequence is that of Putative nickel-responsive regulator from Helicobacter pylori (strain P12).